Reading from the N-terminus, the 363-residue chain is Chorismate synthase (363 aa).

Residues 44 to 63 form a disordered region; it reads DLDRRKPGTSRHTTQRQEPD. Positions 48 and 54 each coordinate NADP(+). Residues 125-127, 237-238, Gly-277, 292-296, and Arg-318 each bind FMN; these read RSS, NA, and KATSS.

Belongs to the chorismate synthase family. Homotetramer. The cofactor is FMNH2.

It catalyses the reaction 5-O-(1-carboxyvinyl)-3-phosphoshikimate = chorismate + phosphate. The protein operates within metabolic intermediate biosynthesis; chorismate biosynthesis; chorismate from D-erythrose 4-phosphate and phosphoenolpyruvate: step 7/7. Catalyzes the anti-1,4-elimination of the C-3 phosphate and the C-6 proR hydrogen from 5-enolpyruvylshikimate-3-phosphate (EPSP) to yield chorismate, which is the branch point compound that serves as the starting substrate for the three terminal pathways of aromatic amino acid biosynthesis. This reaction introduces a second double bond into the aromatic ring system. This is Chorismate synthase from Pseudomonas fluorescens (strain SBW25).